We begin with the raw amino-acid sequence, 469 residues long: Probable monogalactosyldiacylglycerol synthase 2, chloroplastic (469 aa).

A chloroplast-targeting transit peptide spans 1 to 42 (MVISVATPRRSIRDAVLGGVLGAGGRQLYQPLRCAFYDGAAG).

It belongs to the glycosyltransferase 28 family.

The protein localises to the plastid. Its subcellular location is the chloroplast membrane. It catalyses the reaction a 1,2-diacyl-sn-glycerol + UDP-alpha-D-galactose = a 1,2-diacyl-3-O-(beta-D-galactosyl)-sn-glycerol + UDP + H(+). In terms of biological role, involved in the synthesis of the major structural component of photosynthetic membranes. This Oryza sativa subsp. indica (Rice) protein is Probable monogalactosyldiacylglycerol synthase 2, chloroplastic (MGD2).